Consider the following 801-residue polypeptide: Elongation factor G, mitochondrial (801 aa).

Residues 1–62 constitute a mitochondrion transit peptide; it reads MRTPTLARLP…LSKHFQQRRN (62 aa). The region spanning 99–386 is the tr-type G domain; sequence SRVRNIGIAA…GVIDYLPNPS (288 aa). Residues 108-115, 184-188, and 238-241 each bind GTP; these read AHIDSGKT, DTPGH, and NKMD.

Belongs to the TRAFAC class translation factor GTPase superfamily. Classic translation factor GTPase family. EF-G/EF-2 subfamily.

Its subcellular location is the mitochondrion. It participates in protein biosynthesis; polypeptide chain elongation. In terms of biological role, mitochondrial GTPase that catalyzes the GTP-dependent ribosomal translocation step during translation elongation. During this step, the ribosome changes from the pre-translocational (PRE) to the post-translocational (POST) state as the newly formed A-site-bound peptidyl-tRNA and P-site-bound deacylated tRNA move to the P and E sites, respectively. Catalyzes the coordinated movement of the two tRNA molecules, the mRNA and conformational changes in the ribosome. The protein is Elongation factor G, mitochondrial (mef1) of Aspergillus niger (strain ATCC MYA-4892 / CBS 513.88 / FGSC A1513).